The primary structure comprises 1196 residues: NACHT, LRR and PYD domains-containing protein 1b allele 5 (1196 aa).

The segment at methionine 1–aspartate 22 is disordered. The NACHT domain occupies glutamine 126–leucine 435. Glycine 132–serine 139 lines the ATP pocket. 2 LRR repeats span residues asparagine 627–cysteine 647 and serine 684–cysteine 704. The tract at residues phenylalanine 789–phenylalanine 922 is ZU5. An FIIND domain is found at phenylalanine 789 to phenylalanine 1072. Positions serine 923–phenylalanine 1072 are UPA. A CARD domain is found at histidine 1106–serine 1189.

This sequence belongs to the NLRP family. Interacts with DPP9; leading to inhibit activation of the inflammasome. DPP9 acts via formation of a ternary complex, composed of a DPP9 homodimer, one full-length Nlrp1b protein, and one cleaved C-terminus of Nlrp1b (NACHT, LRR and PYD domains-containing protein 1b, C-terminus). Interacts with DPP8; leading to inhibit activation of the inflammasome, probably via formation of a ternary complex with DPP8. Interacts (via LRR repeats) with BCL2 and BCL2L1 (via the loop between motifs BH4 and BH3). Interacts with NOD2; this interaction may increase IL1B release. Interacts with EIF2AK2/PKR; this interaction requires EIF2AK2 activity, is accompanied by EIF2AK2 autophosphorylation and promotes inflammasome assembly in response to B.anthracis lethal toxin. Interacts with MEFV; this interaction targets Nlrp1b to degradation by autophagy, hence preventing excessive IL1B- and IL18-mediated inflammation. In terms of assembly, interacts with the C-terminal part of Nlrp1b (NACHT, LRR and PYD domains-containing protein 1b, C-terminus) in absence of pathogens and other damage-associated signals. As to quaternary structure, interacts with the N-terminal part of Nlrp1b (NACHT, LRR and PYD domains-containing protein 1b, N-terminus) in absence of pathogens and other damage-associated signals. Homomultimer; forms the Nlrp1b inflammasome polymeric complex, a filament composed of homopolymers of this form in response to pathogens and other damage-associated signals. The Nlrp1b inflammasome polymeric complex directly recruits pro-caspase-1 (proCASP1) independently of PYCARD/ASC. Interacts (via CARD domain) with CASP1 (via CARD domain); leading to CASP1 activation. In terms of processing, autocatalytically cleaved. Autocatalytic cleavage in FIIND region occurs constitutively, prior to activation signals, and is required for inflammasome activity (IL1B release), possibly by facilitating CASP1 binding. Both N- and C-terminal parts remain associated non-covalently. Post-translationally, ubiquitinated by the N-end rule pathway in response to pathogens and other damage-associated signals, leading to its degradation by the proteasome and subsequent release of the cleaved C-terminal part of the protein (NACHT, LRR and PYD domains-containing protein 1b, C-terminus), which polymerizes and forms the Nlrp1b inflammasome. (Microbial infection) Cleavage by B.anthracis lethal toxin (LT) endopeptidase promotes ubiquitination and degradation of the N-terminal part, releasing the cleaved C-terminal part of the protein (NACHT, LRR and PYD domains-containing protein 1b, C-terminus), which polymerizes and forms the Nlrp1b inflammasome. Expressed in macrophages.

It is found in the cytoplasm. The protein localises to the cytosol. The protein resides in the inflammasome. Its activity is regulated as follows. Activated by cleavage by B.anthracis lethal toxin (LT) endopeptidase. Cleavage by LT promotes ubiquitination and degradation of the N-terminal part, releasing the cleaved C-terminal part of the protein (NACHT, LRR and PYD domains-containing protein 1b, C-terminus), which polymerizes and forms the Nlrp1b inflammasome. Nlrp1b inflammasome is inhibited by DPP8 and DPP9, which sequester the C-terminal fragment of Nlrp1b (NACHT, LRR and PYD domains-containing protein 1b, C-terminus) in a ternary complex, thereby preventing Nlrp1b oligomerization and activation. Nlrp1b inflammasome is activated by Val-boroPro (Talabostat, PT-100), an inhibitor of dipeptidyl peptidases DPP8 and DPP9. Val-boroPro relieves inhibition of DPP8 and/or DPP9 by promoting disruption of the ternary complex, releasing its C-terminal part from autoinhibition. Activated by metabolic inhibitors, such as 2-deoxy-D-glucose and sodium azide. Not activated by muramyl dipeptide, nor by full-length bacterial peptidoglycan. Its function is as follows. Acts as the sensor component of the Nlrp1b inflammasome, which mediates inflammasome activation in response to various pathogen-associated signals, leading to subsequent pyroptosis. Inflammasomes are supramolecular complexes that assemble in the cytosol in response to pathogens and other damage-associated signals and play critical roles in innate immunity and inflammation. Acts as a recognition receptor (PRR): recognizes specific pathogens and other damage-associated signals, such as B.anthracis lethal toxin (LT) or Val-boroPro inhibitor, and mediates the formation of the inflammasome polymeric complex. In response to pathogen-associated signals, the N-terminal part of Nlrp1b is degraded by the proteasome, releasing the cleaved C-terminal part of the protein (NACHT, LRR and PYD domains-containing protein 1b, C-terminus), which polymerizes to initiate the formation of the inflammasome complex: the inflammasome directly recruits pro-caspase-1 (proCASP1) independently of PYCARD/ASC and promotes caspase-1 (CASP1) activation, which subsequently cleaves and activates inflammatory cytokines IL1B and IL18 and gasdermin-D (GSDMD), leading to pyroptosis. In the absence of GSDMD expression, the Nlrp1b inflammasome is able to recruit and activate CASP8, leading to activation of gasdermin-E (GSDME). Activation of Nlrp1b inflammasome is also required for HMGB1 secretion; the active cytokines and HMGB1 stimulate inflammatory responses. Primary mediator of macrophage susceptibility to B.anthracis LT: in response to B.anthracis infection, macrophages and dendritic cells release IL1B and undergo pyroptosis. This early inflammatory response to the toxin increases resistance to infection by B.anthracis spores. Functionally, constitutes the precursor of the Nlrp1b inflammasome, which mediates autoproteolytic processing within the FIIND domain to generate the N-terminal and C-terminal parts, which are associated non-covalently in absence of pathogens and other damage-associated signals. In terms of biological role, regulatory part that prevents formation of the Nlrp1b inflammasome: in absence of pathogens and other damage-associated signals, interacts with the C-terminal part of Nlrp1b (NACHT, LRR and PYD domains-containing protein 1b, C-terminus), preventing activation of the Nlrp1b inflammasome. In response to pathogen-associated signals, this part is ubiquitinated by the N-end rule pathway and degraded by the proteasome, releasing the cleaved C-terminal part of the protein, which polymerizes and forms the Nlrp1b inflammasome. Constitutes the active part of the Nlrp1b inflammasome. In absence of pathogens and other damage-associated signals, interacts with the N-terminal part of Nlrp1b (NACHT, LRR and PYD domains-containing protein 1b, N-terminus), preventing activation of the Nlrp1b inflammasome. In response to pathogen-associated signals, the N-terminal part of Nlrp1b is degraded by the proteasome, releasing this form, which polymerizes to form the Nlrp1b inflammasome complex: the Nlrp1b inflammasome complex then directly recruits pro-caspase-1 (proCASP1) and promotes caspase-1 (CASP1) activation, leading to gasdermin-D (GSDMD) cleavage and subsequent pyroptosis. The sequence is that of NACHT, LRR and PYD domains-containing protein 1b allele 5 (Nlrp1b) from Mus musculus (Mouse).